Here is a 471-residue protein sequence, read N- to C-terminus: ATP synthase subunit beta 2 (471 aa).

ATP is bound at residue 157 to 164; it reads GGAGVGKT.

The protein belongs to the ATPase alpha/beta chains family. As to quaternary structure, F-type ATPases have 2 components, CF(1) - the catalytic core - and CF(0) - the membrane proton channel. CF(1) has five subunits: alpha(3), beta(3), gamma(1), delta(1), epsilon(1). CF(0) has three main subunits: a(1), b(2) and c(9-12). The alpha and beta chains form an alternating ring which encloses part of the gamma chain. CF(1) is attached to CF(0) by a central stalk formed by the gamma and epsilon chains, while a peripheral stalk is formed by the delta and b chains.

It localises to the cell inner membrane. The enzyme catalyses ATP + H2O + 4 H(+)(in) = ADP + phosphate + 5 H(+)(out). Functionally, produces ATP from ADP in the presence of a proton gradient across the membrane. The catalytic sites are hosted primarily by the beta subunits. The protein is ATP synthase subunit beta 2 of Pelobacter propionicus (strain DSM 2379 / NBRC 103807 / OttBd1).